Here is a 66-residue protein sequence, read N- to C-terminus: Ribosome biogenesis protein Nop10 (66 aa).

It belongs to the NOP10 family.

In terms of biological role, involved in ribosome biogenesis; more specifically in 18S rRNA pseudouridylation and in cleavage of pre-rRNA. This is Ribosome biogenesis protein Nop10 from Desulfurococcus amylolyticus (strain DSM 18924 / JCM 16383 / VKM B-2413 / 1221n) (Desulfurococcus kamchatkensis).